A 387-amino-acid polypeptide reads, in one-letter code: MTVLKMTDLDLQGKRVLIREDLNVPVKDGVVTSDARILASLPTIKLALEKGAAVMVCSHLGRPTEGEFSAENSLKPVADYLSRALGREVPLVADYLGGVEVKAGDIVLFENVRFNKGEKKNADELAQQYAALCDVFVMDAFGTAHRAEGSTHGVAKFAKVAAAGPLLAAELDALGKALGNPAKPMAAIVAGSKVSTKLDVLNSLSQICDQLIVGGGIANTFLAAAGHPVGKSLYEPDLLDTARAIAAKVSVPLPVDVVVAKEFAESAAATVKLIADVADDDMILDIGPQTAAQFAELLKSSRTILWNGPVGVFEFDQFGNGTKVLAQAIADSAAFSIAGGGDTLAAIDKYGVAQQISYISTGGGAFLEFVEGKVLPAVEVLEARAKA.

Substrate contacts are provided by residues 21–23, R36, 59–62, R113, and R146; these read DLN and HLGR. ATP is bound by residues K197, E314, and 340–343; that span reads GGDT.

This sequence belongs to the phosphoglycerate kinase family. Monomer.

It is found in the cytoplasm. The catalysed reaction is (2R)-3-phosphoglycerate + ATP = (2R)-3-phospho-glyceroyl phosphate + ADP. It participates in carbohydrate degradation; glycolysis; pyruvate from D-glyceraldehyde 3-phosphate: step 2/5. This is Phosphoglycerate kinase from Pseudomonas fluorescens (strain ATCC BAA-477 / NRRL B-23932 / Pf-5).